Consider the following 232-residue polypeptide: Ornithine carbamoyltransferase (232 aa).

Carbamoyl phosphate is bound by residues Q15, R39, and 66-69 (HPTQ). L-ornithine-binding positions include N99, D163, and 167–168 (SM). Residues 204-207 (HCLP) and T232 each bind carbamoyl phosphate.

It belongs to the aspartate/ornithine carbamoyltransferase superfamily. OTCase family.

It localises to the cytoplasm. It catalyses the reaction carbamoyl phosphate + L-ornithine = L-citrulline + phosphate + H(+). It functions in the pathway amino-acid biosynthesis; L-arginine biosynthesis; L-arginine from L-ornithine and carbamoyl phosphate: step 1/3. Functionally, reversibly catalyzes the transfer of the carbamoyl group from carbamoyl phosphate (CP) to the N(epsilon) atom of ornithine (ORN) to produce L-citrulline. The protein is Ornithine carbamoyltransferase (argF) of Neisseria flava.